The following is a 471-amino-acid chain: COP9 signalosome complex subunit 1 (471 aa).

The 163-residue stretch at 249–411 folds into the PCI domain; sequence CFLLASFDHC…KILYARDVDQ (163 aa). Residues 445-471 form a disordered region; sequence HVKSPPREGSQGELTPANSQSRMSTNM. Phosphoserine is present on residues Ser448 and Ser454. Positions 456 to 471 are enriched in polar residues; the sequence is GELTPANSQSRMSTNM. Thr459 carries the phosphothreonine modification. Phosphoserine is present on Ser463.

It belongs to the CSN1 family. In terms of assembly, component of the CSN complex, composed of COPS1/GPS1, COPS2, COPS3, COPS4, COPS5, COPS6, COPS7 (COPS7A or COPS7B), COPS8 and COPS9. In the complex, it probably interacts directly with COPS2, COPS3, COPS4 and COPS5. Interacts directly with inositol kinase ITPK1. Interacts with CAPN8. Interacts with USP48. Interacts with ASB4; this interaction negatively regulates GPS1. As to expression, expressed in the base region of the oxyntic and pyloric mucosae.

Its subcellular location is the cytoplasm. The protein localises to the nucleus. Its function is as follows. Essential component of the COP9 signalosome complex (CSN), a complex involved in various cellular and developmental processes. The CSN complex is an essential regulator of the ubiquitin (Ubl) conjugation pathway by mediating the deneddylation of the cullin subunits of SCF-type E3 ligase complexes, leading to decrease the Ubl ligase activity of SCF-type complexes such as SCF, CSA or DDB2. The complex is also involved in phosphorylation of p53/TP53, c-jun/JUN, IkappaBalpha/NFKBIA, ITPK1 and IRF8/ICSBP, possibly via its association with CK2 and PKD kinases. CSN-dependent phosphorylation of TP53 and JUN promotes and protects degradation by the Ubl system, respectively. Suppresses G-protein- and mitogen-activated protein kinase-mediated signal transduction. The sequence is that of COP9 signalosome complex subunit 1 (Gps1) from Mus musculus (Mouse).